The sequence spans 430 residues: Adenylosuccinate synthetase (430 aa).

Residues 13–19 (GDEGKGK) and 41–43 (GHT) contribute to the GTP site. Catalysis depends on Asp-14, which acts as the Proton acceptor. The Mg(2+) site is built by Asp-14 and Gly-41. IMP contacts are provided by residues 14–17 (DEGK), 39–42 (NAGH), Thr-130, Arg-144, Gln-225, Thr-240, and Arg-304. The Proton donor role is filled by His-42. 300 to 306 (ATTGRAR) serves as a coordination point for substrate. GTP contacts are provided by residues Arg-306, 332–334 (KLD), and 414–416 (STG).

It belongs to the adenylosuccinate synthetase family. As to quaternary structure, homodimer. It depends on Mg(2+) as a cofactor.

It localises to the cytoplasm. It catalyses the reaction IMP + L-aspartate + GTP = N(6)-(1,2-dicarboxyethyl)-AMP + GDP + phosphate + 2 H(+). The protein operates within purine metabolism; AMP biosynthesis via de novo pathway; AMP from IMP: step 1/2. Plays an important role in the de novo pathway of purine nucleotide biosynthesis. Catalyzes the first committed step in the biosynthesis of AMP from IMP. The polypeptide is Adenylosuccinate synthetase (Pseudomonas fluorescens (strain ATCC BAA-477 / NRRL B-23932 / Pf-5)).